A 1446-amino-acid chain; its full sequence is Major viral transcription factor ICP4 homolog (1446 aa).

4 disordered regions span residues 25–59 (AEEEGIASGPDGGSQGSRRRGSSGEDLLFGPGGLF), 73–493 (AAAG…PPAD), 801–987 (PGPA…HTPR), and 1385–1446 (THRP…LLLR). Low complexity predominate over residues 73–94 (AAAGATRPPRPPSAQQQQQPRR). Acidic residues predominate over residues 101-112 (VLDDEDEEEDEP). 2 stretches are compositionally biased toward low complexity: residues 166-189 (RSSPSAASPASSSGSPGPSAAPRR) and 216-241 (PAAVAAAPARRGPASPASPAAGPVSA). Over residues 262–277 (REPLLDEPAAARRLDP) the composition is skewed to basic and acidic residues. Low complexity-rich tracts occupy residues 284–306 (SPVSSNPNSNSNSTTTVAVETVA) and 345–397 (GFSS…SSSS). The segment covering 415–426 (GPPPSPPAPAAA) has biased composition (pro residues). A compositionally biased stretch (low complexity) spans 427–442 (PRPSASSASSSAAASP). A compositionally biased stretch (pro residues) spans 803–815 (PAEPAPGLPPLWP). Positions 827–877 (PAAAGAPSGLPGSGPSSPASTKSSSSTKSSSSTKSGLSGSSGYASSPAAGP) are enriched in low complexity. Residues 883–892 (RRKKKRRAPG) are compositionally biased toward basic residues. Positions 933-952 (LGLGPAPDPAPALLSSSSSS) are enriched in low complexity.

The protein belongs to the herpesviridae ICP4 family. Post-translationally, a long stretch of serine residues may be a major site of phosphorylation.

The protein resides in the host nucleus. This IE protein is a multifunctional protein capable of migrating to the nucleus, binding to DNA, trans-activating other viral genes, and autoregulating its own synthesis. The sequence is that of Major viral transcription factor ICP4 homolog (IE) from Suid herpesvirus 1 (strain Kaplan) (SuHV-1).